Reading from the N-terminus, the 460-residue chain is NADH-ubiquinone oxidoreductase chain 4 (460 aa).

Transmembrane regions (helical) follow at residues 22–42, 59–79, 93–113, 114–134, 148–168, 195–215, 225–245, 258–278, 286–306, 310–330, 351–371, 394–414, and 440–460; these read WLWPITTTHSLLIALLSLLWF, IDPLSAPLLILTCWLLPLMIL, QRIYITLLISLQTFLIMAFSA, TELIMFYIMFEATLIPTLIII, TYFLFYTLIGSLPLLVALLLM, FWWTACLIAFLVKMPLYGVHL, PIAGSMILAAVLLKLGGYGMM, MAYPFLILAIWGVIMTSSICL, LIAYSSVSHMGLVAGAIMIQT, FAGAITLMIAHGLVSSALFCL, VMLPLMATWWFIANLANLALP, ILLTGLGVLITASYSLYMFLM, and LHLIPMLLLILKPELIWGWTF.

This sequence belongs to the complex I subunit 4 family.

Its subcellular location is the mitochondrion membrane. It carries out the reaction a ubiquinone + NADH + 5 H(+)(in) = a ubiquinol + NAD(+) + 4 H(+)(out). Its function is as follows. Core subunit of the mitochondrial membrane respiratory chain NADH dehydrogenase (Complex I) that is believed to belong to the minimal assembly required for catalysis. Complex I functions in the transfer of electrons from NADH to the respiratory chain. The immediate electron acceptor for the enzyme is believed to be ubiquinone. The chain is NADH-ubiquinone oxidoreductase chain 4 (MT-ND4) from Squalus acanthias (Spiny dogfish).